A 300-amino-acid polypeptide reads, in one-letter code: Cation-efflux pump FieF (300 aa).

4 consecutive transmembrane segments (helical) span residues 12-32, 40-60, 82-102, and 114-134; these read AALS…FAWW, LAAL…LFVV, AALA…LTGF, and PSIG…LVTF. Zn(2+) is bound by residues Asp-45 and Asp-49. Positions 153 and 157 each coordinate Zn(2+). The next 2 membrane-spanning stretches (helical) occupy residues 155-175 and 178-198; these read QSDV…WYGF and ADAL…LRMG.

It belongs to the cation diffusion facilitator (CDF) transporter (TC 2.A.4) family. FieF subfamily. In terms of assembly, homodimer.

The protein localises to the cell inner membrane. It catalyses the reaction Zn(2+)(in) + H(+)(out) = Zn(2+)(out) + H(+)(in). The enzyme catalyses Cd(2+)(in) + H(+)(out) = Cd(2+)(out) + H(+)(in). It carries out the reaction Fe(2+)(in) + H(+)(out) = Fe(2+)(out) + H(+)(in). Functionally, divalent metal cation transporter which exports Zn(2+), Cd(2+) and possibly Fe(2+). May be involved in zinc and iron detoxification by efflux. The polypeptide is Cation-efflux pump FieF (Yersinia pestis bv. Antiqua (strain Antiqua)).